A 247-amino-acid chain; its full sequence is UDP-2,3-diacylglucosamine hydrolase (247 aa).

Positions 8, 10, 41, 79, and 114 each coordinate Mn(2+). 79 to 80 (NR) contributes to the substrate binding site. Substrate-binding residues include D122, S160, D171, N174, and H202. Residues H202 and H204 each coordinate Mn(2+).

It belongs to the LpxH family. Mn(2+) serves as cofactor.

The protein resides in the cell inner membrane. It carries out the reaction UDP-2-N,3-O-bis[(3R)-3-hydroxytetradecanoyl]-alpha-D-glucosamine + H2O = 2-N,3-O-bis[(3R)-3-hydroxytetradecanoyl]-alpha-D-glucosaminyl 1-phosphate + UMP + 2 H(+). The protein operates within glycolipid biosynthesis; lipid IV(A) biosynthesis; lipid IV(A) from (3R)-3-hydroxytetradecanoyl-[acyl-carrier-protein] and UDP-N-acetyl-alpha-D-glucosamine: step 4/6. Functionally, hydrolyzes the pyrophosphate bond of UDP-2,3-diacylglucosamine to yield 2,3-diacylglucosamine 1-phosphate (lipid X) and UMP by catalyzing the attack of water at the alpha-P atom. Involved in the biosynthesis of lipid A, a phosphorylated glycolipid that anchors the lipopolysaccharide to the outer membrane of the cell. This chain is UDP-2,3-diacylglucosamine hydrolase, found in Xanthomonas oryzae pv. oryzae (strain MAFF 311018).